Reading from the N-terminus, the 546-residue chain is Chaperonin GroEL 6 (546 aa).

ATP-binding positions include 30 to 33, lysine 51, 87 to 91, glycine 415, and aspartate 496; these read TLGP and DGTTT.

It belongs to the chaperonin (HSP60) family. In terms of assembly, forms a cylinder of 14 subunits composed of two heptameric rings stacked back-to-back. Interacts with the co-chaperonin GroES.

It is found in the cytoplasm. It carries out the reaction ATP + H2O + a folded polypeptide = ADP + phosphate + an unfolded polypeptide.. Functionally, together with its co-chaperonin GroES, plays an essential role in assisting protein folding. The GroEL-GroES system forms a nano-cage that allows encapsulation of the non-native substrate proteins and provides a physical environment optimized to promote and accelerate protein folding. This is Chaperonin GroEL 6 from Bradyrhizobium diazoefficiens (strain JCM 10833 / BCRC 13528 / IAM 13628 / NBRC 14792 / USDA 110).